The following is a 602-amino-acid chain: Aspartate--tRNA(Asp/Asn) ligase (602 aa).

Glu177 contacts L-aspartate. Residues 201–204 (QLFK) are aspartate. An L-aspartate-binding site is contributed by Arg223. ATP-binding positions include 223-225 (RDE) and Gln232. Position 460 (His460) interacts with L-aspartate. Glu497 serves as a coordination point for ATP. Arg504 serves as a coordination point for L-aspartate. ATP is bound at residue 549–552 (GLDR).

The protein belongs to the class-II aminoacyl-tRNA synthetase family. Type 1 subfamily. As to quaternary structure, homodimer.

It localises to the cytoplasm. It carries out the reaction tRNA(Asx) + L-aspartate + ATP = L-aspartyl-tRNA(Asx) + AMP + diphosphate. Its function is as follows. Aspartyl-tRNA synthetase with relaxed tRNA specificity since it is able to aspartylate not only its cognate tRNA(Asp) but also tRNA(Asn). Reaction proceeds in two steps: L-aspartate is first activated by ATP to form Asp-AMP and then transferred to the acceptor end of tRNA(Asp/Asn). This Prochlorococcus marinus (strain MIT 9515) protein is Aspartate--tRNA(Asp/Asn) ligase.